Consider the following 92-residue polypeptide: Small ribosomal subunit protein uS19 (92 aa).

Belongs to the universal ribosomal protein uS19 family.

Functionally, protein S19 forms a complex with S13 that binds strongly to the 16S ribosomal RNA. This is Small ribosomal subunit protein uS19 from Shewanella halifaxensis (strain HAW-EB4).